The primary structure comprises 352 residues: Beta-1,4-xylanase (352 aa).

A signal peptide spans 1-23 (MINQRFSILVLLLILLTFSLGFL). A GH10 domain is found at 29–352 (GMEIPSLKEV…KKAFWEIVKF (324 aa)). Residue Glu-155 is the Proton donor of the active site. The active-site Nucleophile is the Glu-262.

This sequence belongs to the glycosyl hydrolase 10 (cellulase F) family.

It localises to the secreted. It carries out the reaction Endohydrolysis of (1-&gt;4)-beta-D-xylosidic linkages in xylans.. The protein operates within glycan degradation; xylan degradation. This chain is Beta-1,4-xylanase (xynA), found in Dictyoglomus thermophilum.